Consider the following 381-residue polypeptide: Creatine kinase M-type (381 aa).

The 88-residue stretch at 11-98 folds into the Phosphagen kinase N-terminal domain; the sequence is KLNYKSEEEY…FDPIIQDRHG (88 aa). One can recognise a Phosphagen kinase C-terminal domain in the interval 125–367; it reads YVLSSRVRTG…KLMVEMEKKL (243 aa). 128–132 is a binding site for ATP; sequence SSRVR. Serine 164 carries the phosphoserine modification. At threonine 166 the chain carries Phosphothreonine. Residue serine 178 is modified to Phosphoserine. A Phosphothreonine modification is found at threonine 180. Residue histidine 191 coordinates ATP. Serine 199 is subject to Phosphoserine. ATP-binding residues include arginine 236 and arginine 292. A phosphothreonine mark is found at threonine 313 and threonine 322. Residue 320–325 participates in ATP binding; sequence RGTGGV. Serine 372 bears the Phosphoserine mark.

Belongs to the ATP:guanido phosphotransferase family. In terms of assembly, dimer of identical or non-identical chains, which can be either B (brain type) or M (muscle type). With MM being the major form in skeletal muscle and myocardium, MB existing in myocardium, and BB existing in many tissues, especially brain.

It carries out the reaction creatine + ATP = N-phosphocreatine + ADP + H(+). In terms of biological role, reversibly catalyzes the transfer of phosphate between ATP and various phosphogens (e.g. creatine phosphate). Creatine kinase isoenzymes play a central role in energy transduction in tissues with large, fluctuating energy demands, such as skeletal muscle, heart, brain and spermatozoa. The sequence is that of Creatine kinase M-type (CKM) from Oryctolagus cuniculus (Rabbit).